The chain runs to 151 residues: UPF0178 protein YaiI (151 aa).

Belongs to the UPF0178 family.

The sequence is that of UPF0178 protein YaiI from Salmonella choleraesuis (strain SC-B67).